Here is a 447-residue protein sequence, read N- to C-terminus: Protein king tubby (447 aa).

Composition is skewed to low complexity over residues 71–92 (GTGP…YSDS) and 157–169 (NNNN…NSSS). A disordered region spans residues 71–196 (GTGPNVTATS…GGAPDTEGDV (126 aa)).

It belongs to the TUB family.

It localises to the cytoplasm. The protein localises to the nucleus. The chain is Protein king tubby from Anopheles gambiae (African malaria mosquito).